Here is a 49-residue protein sequence, read N- to C-terminus: DNA-directed RNA polymerase subunit Rpo12 (49 aa).

3 residues coordinate Zn(2+): cysteine 11, cysteine 27, and cysteine 30.

The protein belongs to the archaeal Rpo12/eukaryotic RPC10 RNA polymerase subunit family. As to quaternary structure, part of the RNA polymerase complex. Requires Zn(2+) as cofactor.

It is found in the cytoplasm. The catalysed reaction is RNA(n) + a ribonucleoside 5'-triphosphate = RNA(n+1) + diphosphate. DNA-dependent RNA polymerase (RNAP) catalyzes the transcription of DNA into RNA using the four ribonucleoside triphosphates as substrates. This chain is DNA-directed RNA polymerase subunit Rpo12, found in Pyrococcus abyssi (strain GE5 / Orsay).